The chain runs to 378 residues: Protein FAM170B (378 aa).

Disordered stretches follow at residues 1-56 (MKHH…LPDD), 244-265 (TRDQKQDQQPVEEEQSLSDSSE), and 277-378 (QQQP…QQGK). Composition is skewed to low complexity over residues 277–339 (QQQP…QPLQ) and 349–378 (PQKQQQRQQQRQQQPPRQQQKQQPLQQQGK).

This sequence belongs to the FAM170 family. As to quaternary structure, interacts with GOPC. Exclusively expressed in adult testis (at protein level). Expression first started at postnatal week 3 in round spermatids, elongated spermatids and mature sperm.

The protein localises to the cytoplasmic vesicle. Its subcellular location is the secretory vesicle. It is found in the acrosome. The protein resides in the acrosome outer membrane. Plays a role in fertilization through the acrosome reaction. The protein is Protein FAM170B of Mus musculus (Mouse).